We begin with the raw amino-acid sequence, 307 residues long: NAD kinase 1 (307 aa).

Asp-67 functions as the Proton acceptor in the catalytic mechanism. NAD(+) contacts are provided by residues 67-68 (DG), 149-150 (NE), Arg-160, Asp-181, and 192-197 (TCYTSS).

This sequence belongs to the NAD kinase family. The cofactor is a divalent metal cation.

It is found in the cytoplasm. The catalysed reaction is NAD(+) + ATP = ADP + NADP(+) + H(+). Its function is as follows. Involved in the regulation of the intracellular balance of NAD and NADP, and is a key enzyme in the biosynthesis of NADP. Catalyzes specifically the phosphorylation on 2'-hydroxyl of the adenosine moiety of NAD to yield NADP. Essential for photoheterotrophic growth. Has a significant function in the oxidative pentose phosphate (OPP) pathway for glucose catabolism under photoheterotrophic conditions. Is also involved in cellular redox homeostasis. The chain is NAD kinase 1 from Synechocystis sp. (strain ATCC 27184 / PCC 6803 / Kazusa).